Reading from the N-terminus, the 504-residue chain is Anaerobic nitric oxide reductase transcription regulator NorR (504 aa).

Aspartate 57 is modified (4-aspartylphosphate). The Sigma-54 factor interaction domain maps to 187-416 (MIGLSPGMTQ…LEHAIHRAVV (230 aa)). Residues 215–222 (GETGTGKE) and 278–287 (ADNGTLFLDE) contribute to the ATP site. Residues 479-498 (WAASARMLETDVANLHRLAK) constitute a DNA-binding region (H-T-H motif).

The protein operates within nitrogen metabolism; nitric oxide reduction. Its function is as follows. Required for the expression of anaerobic nitric oxide (NO) reductase, acts as a transcriptional activator for at least the norVW operon. Activation also requires sigma-54. The polypeptide is Anaerobic nitric oxide reductase transcription regulator NorR (Escherichia fergusonii (strain ATCC 35469 / DSM 13698 / CCUG 18766 / IAM 14443 / JCM 21226 / LMG 7866 / NBRC 102419 / NCTC 12128 / CDC 0568-73)).